We begin with the raw amino-acid sequence, 95 residues long: MAGAPHPHTYMGWWGSLGSPKQKYITQYTISPYAAKPLKGAAYNAVFNTFRRTKNQFLYVAIPFVVVWSIWTRARDYNEYLYTKEGREELERVNV.

The chain crosses the membrane as a helical span at residues 57–74 (FLYVAIPFVVVWSIWTRA).

The protein belongs to the UQCRQ/QCR8 family. As to quaternary structure, component of the ubiquinol-cytochrome c oxidoreductase (cytochrome b-c1 complex, complex III, CIII), a multisubunit enzyme composed of 10 subunits. The complex is composed of 3 respiratory subunits cytochrome b (COB), cytochrome c1 (CYT1) and Rieske protein (RIP1), 2 core protein subunits COR1 and QCR2, and 5 low-molecular weight protein subunits QCR6, QCR7, QCR8, QCR9 and QCR10. The complex exists as an obligatory dimer and forms supercomplexes (SCs) in the inner mitochondrial membrane with a monomer or a dimer of cytochrome c oxidase (complex IV, CIV), resulting in 2 different assemblies (supercomplexes III(2)IV and III(2)IV(2)).

It localises to the membrane. It is found in the mitochondrion inner membrane. Functionally, component of the ubiquinol-cytochrome c oxidoreductase, a multisubunit transmembrane complex that is part of the mitochondrial electron transport chain which drives oxidative phosphorylation. The complex plays an important role in the uptake of multiple carbon sources present in different host niches. The polypeptide is Cytochrome b-c1 complex subunit 8, mitochondrial (Candida albicans (strain SC5314 / ATCC MYA-2876) (Yeast)).